A 439-amino-acid chain; its full sequence is tRNA modification GTPase MnmE (439 aa).

Arg24, Glu81, and Lys121 together coordinate (6S)-5-formyl-5,6,7,8-tetrahydrofolate. The TrmE-type G domain maps to Gly218–Lys363. Residue Asn228 coordinates K(+). GTP contacts are provided by residues Asn228–Ser233, Thr247–Thr253, and Asp272–Gly275. Ser232 is a Mg(2+) binding site. Residues Thr247, Ile249, and Thr252 each contribute to the K(+) site. Residue Thr253 participates in Mg(2+) binding. Position 439 (Lys439) interacts with (6S)-5-formyl-5,6,7,8-tetrahydrofolate.

This sequence belongs to the TRAFAC class TrmE-Era-EngA-EngB-Septin-like GTPase superfamily. TrmE GTPase family. As to quaternary structure, homodimer. Heterotetramer of two MnmE and two MnmG subunits. It depends on K(+) as a cofactor.

It is found in the cytoplasm. Its function is as follows. Exhibits a very high intrinsic GTPase hydrolysis rate. Involved in the addition of a carboxymethylaminomethyl (cmnm) group at the wobble position (U34) of certain tRNAs, forming tRNA-cmnm(5)s(2)U34. The sequence is that of tRNA modification GTPase MnmE from Rhizobium etli (strain CIAT 652).